We begin with the raw amino-acid sequence, 453 residues long: Tubulin delta chain (453 aa).

143–149 (AGGTGSG) lines the GTP pocket.

This sequence belongs to the tubulin family. In terms of assembly, found in a complex with TEDC1, TEDC2, TUBE1 and TUBD1.

Its subcellular location is the nucleus. It localises to the cytoplasm. The protein resides in the cytoskeleton. The protein localises to the microtubule organizing center. It is found in the centrosome. Its subcellular location is the centriole. It localises to the cell projection. The protein resides in the cilium. Functionally, acts as a positive regulator of hedgehog signaling and regulates ciliary function. The sequence is that of Tubulin delta chain (TUBD1) from Macaca fascicularis (Crab-eating macaque).